A 604-amino-acid chain; its full sequence is Aspartate--tRNA(Asp/Asn) ligase (604 aa).

Residue glutamate 175 participates in L-aspartate binding. The aspartate stretch occupies residues 199-202; sequence QMFK. Residues arginine 221 and histidine 451 each coordinate L-aspartate. 221–223 is a binding site for ATP; sequence RDE. Glutamate 485 contacts ATP. Residue arginine 492 coordinates L-aspartate. Residue 537–540 coordinates ATP; that stretch reads GIDR.

The protein belongs to the class-II aminoacyl-tRNA synthetase family. Type 1 subfamily. Homodimer.

Its subcellular location is the cytoplasm. The catalysed reaction is tRNA(Asx) + L-aspartate + ATP = L-aspartyl-tRNA(Asx) + AMP + diphosphate. Functionally, aspartyl-tRNA synthetase with relaxed tRNA specificity since it is able to aspartylate not only its cognate tRNA(Asp) but also tRNA(Asn). Reaction proceeds in two steps: L-aspartate is first activated by ATP to form Asp-AMP and then transferred to the acceptor end of tRNA(Asp/Asn). This Erythrobacter litoralis (strain HTCC2594) protein is Aspartate--tRNA(Asp/Asn) ligase.